The sequence spans 306 residues: Probable C-terminal domain small phosphatase (306 aa).

Residues 1 to 36 are compositionally biased toward polar residues; the sequence is MNSSPITQVSNPNDSLNHSSTNLIPSSHNSLNNYPQ. 2 disordered regions span residues 1-45 and 61-116; these read MNSS…NRKK and NDQN…NKDS. Residues 61–111 are compositionally biased toward low complexity; sequence NDQNNGNNINTDNGASNNDKLQQQKQYNQQQQQQYNQHQQQQQQQQQQQQY. The region spanning 132 to 290 is the FCP1 homology domain; sequence RHVGLKTLVL…LDLLPLLDDL (159 aa). Asp142 acts as the 4-aspartylphosphate intermediate in catalysis. The Mg(2+) site is built by Asp142, Asp144, and Asn253. Asp144 acts as the Proton donor in catalysis.

As to quaternary structure, monomer. Requires Mg(2+) as cofactor.

The protein localises to the nucleus. The catalysed reaction is O-phospho-L-seryl-[protein] + H2O = L-seryl-[protein] + phosphate. It catalyses the reaction O-phospho-L-threonyl-[protein] + H2O = L-threonyl-[protein] + phosphate. In terms of biological role, may function as a phosphatase involved in the regulation of cell growth and differentiation. This is Probable C-terminal domain small phosphatase (fcpA) from Dictyostelium discoideum (Social amoeba).